We begin with the raw amino-acid sequence, 487 residues long: Gasdermin-D (487 aa).

Tyr-38 is modified (phosphotyrosine). Residues Cys-39, Cys-57, and Cys-77 each carry the S-(2-succinyl)cysteine modification. The next 2 beta stranded transmembrane spans lie at 92–98 and 104–109; these read QGRVMLS and KISGGA. Cys-122 is subject to S-(2-succinyl)cysteine. 2 beta stranded membrane passes run 181 to 187 and 192 to 198; these read GSGQFTL and CLKGEGK. An S-(2-succinyl)cysteine mark is found at Cys-192 and Cys-265. The S-palmitoyl cysteine moiety is linked to residue Cys-192. The interval 278-298 is linker helix loop; that stretch reads IDEEELIEAADFQGLYAEVKA. Cys-299, Cys-434, and Cys-487 each carry S-(2-succinyl)cysteine.

It belongs to the gasdermin family. Homooligomer; homooligomeric ring-shaped pore complex containing 27-28 subunits when inserted in the membrane. Homooligomerization is promoted by the mTORC1 complex in macrophages. In response to a canonical inflammasome stimulus, such as nigericin, recruited to NLRP3 inflammasone with similar kinetics to that of uncleaved CASP1 precursor. Although this recruitment is also observed in the absence of PYCARD, it is more efficient in its presence. Cleavage at Asp-276 by CASP1 (mature and uncleaved precursor forms), CASP4/CASP11 or CASP8 relieves autoinhibition and is sufficient to initiate pyroptosis. Cleavage by CASP1 and CASP4/CASP11 is not strictly dependent on the consensus cleavage site on GSDMD but depends on an exosite interface on CASP1 that recognizes and binds the Gasdermin-D, C-terminal (GSDMD-CT) part. Cleavage by CASP8 takes place following inactivation of MAP3K7/TAK1 by Yersinia toxin YopJ. Cleavage at Asp-88 by CASP3 or CASP7 inactivates the ability to mediate pyroptosis, but generates the Gasdermin-D, p13 chain, which translocates to the nucleus and acts as a transcription regulator. Cleavage by papain allergen generates the Gasdermin-D, p40 chain. In terms of processing, palmitoylated at Cys-192 by ZDHHC5 and ZDHHC9 in response to microbial infection and danger signals. May also be palmitoylated by ZDHHC7. Palmitoylation takes place before cleavage by caspases (CASP1, CASP4, CASP5 or CASP8) and is required for membrane translocation and pore formation. Depalmitoylated by LYPLA2. Post-translationally, succination of Cys-192 by the Krebs cycle intermediate fumarate, which leads to S-(2-succinyl)cysteine residues, inhibits processing by caspases, and ability to initiate pyroptosis. Succination modification is catalyzed by a non-enzymatic reaction caused by an accumulation of fumarate. Glycosylated: O-GlcNAcylation by OGT leads to reduced cleavage by CASP4 and decreased LPS-induced endothelial cell pyroptosis. In terms of tissue distribution, highly expressed in brain endothelial cells.

It is found in the cytoplasm. It localises to the cytosol. The protein resides in the inflammasome. Its subcellular location is the cell membrane. The protein localises to the secreted. It is found in the mitochondrion membrane. It localises to the nucleus. The full-length protein before cleavage is inactive: intramolecular interactions between N- and C-terminal domains mediate autoinhibition in the absence of activation signal. The intrinsic pyroptosis-inducing activity is carried by the released N-terminal moiety (Gasdermin-D, N-terminal) following cleavage by inflammatory caspases CASP1, CASP4/CASP11 or CASP8. Cleavage at Asp-88 by CASP3 or CASP7 inactivates the ability to mediate pyroptosis. Pore formation is specifically inhibited by VHH(GSDMD-1) nanobody, protecting against excessive pyroptosis. Inhibited by small molecule NU6300, which covalently reacts with Cys-191, thereby preventing palmitoylation and pyroptosis. Precursor of a pore-forming protein that plays a key role in host defense against pathogen infection and danger signals. This form constitutes the precursor of the pore-forming protein: upon cleavage, the released N-terminal moiety (Gasdermin-D, N-terminal) binds to membranes and forms pores, triggering pyroptosis. Its function is as follows. Promotes pyroptosis in response to microbial infection and danger signals. Produced by the cleavage of gasdermin-D by inflammatory caspases CASP1 or CASP4/CASP11 in response to canonical, as well as non-canonical (such as cytosolic LPS) inflammasome activators. After cleavage, moves to the plasma membrane where it strongly binds to inner leaflet lipids, including monophosphorylated phosphatidylinositols, such as phosphatidylinositol 4-phosphate, bisphosphorylated phosphatidylinositols, such as phosphatidylinositol (4,5)-bisphosphate, as well as phosphatidylinositol (3,4,5)-bisphosphate, and more weakly to phosphatidic acid and phosphatidylserine. Homooligomerizes within the membrane and forms pores of 10-15 nanometers (nm) of inner diameter, allowing the release of mature interleukin-1 (IL1B and IL18) and triggering pyroptosis. Gasdermin pores also allow the release of mature caspase-7 (CASP7). In some, but not all, cells types, pyroptosis is followed by pyroptotic cell death, which is caused by downstream activation of ninjurin-1 (NINJ1), which mediates membrane rupture (cytolysis). Also forms pores in the mitochondrial membrane, resulting in release of mitochondrial DNA (mtDNA) into the cytosol. Gasdermin-D, N-terminal released from pyroptotic cells into the extracellular milieu rapidly binds to and kills both Gram-negative and Gram-positive bacteria, without harming neighboring mammalian cells, as it does not disrupt the plasma membrane from the outside due to lipid-binding specificity. Under cell culture conditions, also active against intracellular bacteria, such as Listeria monocytogenes. Also active in response to MAP3K7/TAK1 inactivation by Yersinia toxin YopJ, which triggers cleavage by CASP8 and subsequent activation. Required for mucosal tissue defense against enteric pathogens. Activation of the non-canonical inflammasome in brain endothelial cells can lead to excessive pyroptosis, leading to blood-brain barrier breakdown. Strongly binds to bacterial and mitochondrial lipids, including cardiolipin. Does not bind to unphosphorylated phosphatidylinositol, phosphatidylethanolamine nor phosphatidylcholine. Functionally, transcription coactivator produced by the cleavage by CASP3 or CASP7 in the upper small intestine in response to dietary antigens. Required to maintain food tolerance in small intestine: translocates to the nucleus and acts as a coactivator for STAT1 to induce the transcription of CIITA and MHC class II molecules, which in turn induce type 1 regulatory T (Tr1) cells in upper small intestine. In terms of biological role, produced by the cleavage by papain allergen. After cleavage, moves to the plasma membrane and homooligomerizes within the membrane and forms pores of 10-15 nanometers (nm) of inner diameter, allowing the specific release of mature interleukin-33 (IL33), promoting type 2 inflammatory immune response. The protein is Gasdermin-D of Mus musculus (Mouse).